A 37-amino-acid polypeptide reads, in one-letter code: M-oxotoxin-Ot2c (37 aa).

Expressed by the venom gland.

Its subcellular location is the secreted. Functionally, disrupts biological membranes, particularly those rich in phosphocholine. Has antimicrobial activity against Gram-negative bacterium E.coli, Gram-positive bacteria B.subtilis and S.aureus, and hemolytic activity against sheep, pig and guinea pig red blood cells. Has insecticidal activity against S.frugiperda ovarian cells by opening non-selective ion channels. Enhances the insecticidal activity of spider venom neurotoxic peptides. This chain is M-oxotoxin-Ot2c, found in Oxyopes takobius (Lynx spider).